The chain runs to 364 residues: MSSSIEQKKGSTRQRKCGFCKSNRDKECGQLLISENQKVAAHHKCMLFSSALVSSHSDNESLGGFSIEDVQKEIKRGTKLMCSLCHCPGATIGCDVKTCHRTYHYHCALHDKAQIREKPSQGIYMVYCRKHKKTAHNSEADLEESFNEHELEPSSPKTKKKSRKGRPRKTNLKGLPEDSRSTSSHGTDEMESSSYRDRSPHRSSPNDTRPKCGFCHVGEEENEARGKLHIFNAKKAAAHYKCMLFSSGTVQLTTTSRAEFGDFDIKTVLQEIKRGKRMKCTLCSQPGATIGCEIKACVKTYHYHCGVQDKAKYIENMSRGIYKLYCKNHSGNDERDEEDEERESKSRGRVAIDQQLTQQQLNGN.

S2 carries the post-translational modification N-acetylserine. 2 short sequence motifs (nuclear localization signal) span residues 13 to 16 and 129 to 133; these read RQRK and RKHKK. Residues 14–52 form a C2HC pre-PHD-type 1 zinc finger; sequence QRKCGFCKSNRDKECGQLLISENQKVAAHHKCMLFSSAL. The extended PHD1 domain (ePHD1) stretch occupies residues 14–132; sequence QRKCGFCKSN…IYMVYCRKHK (119 aa). The PHD-type 1 zinc finger occupies 80–132; the sequence is LMCSLCHCPGATIGCDVKTCHRTYHYHCALHDKAQIREKPSQGIYMVYCRKHK. Phosphoserine is present on residues S138, S145, and S155. The segment at 139–211 is disordered; sequence EADLEESFNE…RSSPNDTRPK (73 aa). Residues 157-169 carry the Nucleolar localization signal motif; it reads KTKKKSRKGRPRK. Over residues 157–171 the composition is skewed to basic residues; the sequence is KTKKKSRKGRPRKTN. Residue K173 forms a Glycyl lysine isopeptide (Lys-Gly) (interchain with G-Cter in SUMO2) linkage. Phosphoserine occurs at positions 183 and 199. The segment at 209 to 249 adopts a C2HC pre-PHD-type 2 zinc-finger fold; sequence RPKCGFCHVGEEENEARGKLHIFNAKKAAAHYKCMLFSSGT. Residues 209-330 form an extended PHD2 domain (ePHD2) region; it reads RPKCGFCHVG…IYKLYCKNHS (122 aa). K227 participates in a covalent cross-link: Glycyl lysine isopeptide (Lys-Gly) (interchain with G-Cter in SUMO2). The PHD-type 2 zinc finger occupies 278-330; sequence MKCTLCSQPGATIGCEIKACVKTYHYHCGVQDKAKYIENMSRGIYKLYCKNHS. The segment at 330–364 is disordered; the sequence is SGNDERDEEDEERESKSRGRVAIDQQLTQQQLNGN. A compositionally biased stretch (polar residues) spans 354 to 364; that stretch reads QQLTQQQLNGN. T357 is modified (phosphothreonine).

As to quaternary structure, interacts with UBTF. Interacts with the NuRD complex component RBBP4 (via the nucleolar localization motif), the interaction mediates transcriptional repression activity. As to expression, at 12.5 dpc it is highly expressed in the embryonic central nervous system and at lower levels in other tissues. Very low levels present throughout the adult brain.

The protein resides in the nucleus. The protein localises to the nucleolus. It is found in the chromosome. Its subcellular location is the centromere. It localises to the kinetochore. In terms of biological role, transcriptional regulator that associates with ribosomal RNA promoters and suppresses ribosomal RNA (rRNA) transcription. The sequence is that of PHD finger protein 6 (Phf6) from Mus musculus (Mouse).